The primary structure comprises 442 residues: Adenylosuccinate synthetase (442 aa).

GTP is bound by residues 25–31 (GDEGKGK), 53–55 (GHT), and K62. The active-site Proton acceptor is the D26. Positions 26 and 53 each coordinate Mg(2+). Residues 26-29 (DEGK) and 51-54 (NAGH) contribute to the IMP site. H54 functions as the Proton donor in the catalytic mechanism. 4 residues coordinate IMP: T141, R155, N232, and T247. T307 serves as a coordination point for GTP. Residue 307–313 (TTTKRPR) coordinates substrate. R311 lines the IMP pocket. Residues R313, 339–341 (KLD), and 425–427 (GVG) each bind GTP.

It belongs to the adenylosuccinate synthetase family. Homodimer. Requires Mg(2+) as cofactor.

It localises to the cytoplasm. The catalysed reaction is IMP + L-aspartate + GTP = N(6)-(1,2-dicarboxyethyl)-AMP + GDP + phosphate + 2 H(+). It functions in the pathway purine metabolism; AMP biosynthesis via de novo pathway; AMP from IMP: step 1/2. With respect to regulation, inhibited by hadacidin. Activated by fructose 1,6-bisphosphate. Its function is as follows. Plays an important role in the salvage pathway for purine nucleotide biosynthesis. Catalyzes the first committed step in the biosynthesis of AMP from IMP. The polypeptide is Adenylosuccinate synthetase (Adss) (Plasmodium falciparum).